The sequence spans 212 residues: Ropporin-1A (212 aa).

Positions 12–49 (PELPKMLKEFAKAAIRVQPQDLIQWAADYFEALSRGET) constitute an RIIa domain. A Phosphoserine modification is found at Ser56. The segment at 209–212 (VQLE) is interaction with RHPN1.

The protein belongs to the ropporin family. As to quaternary structure, homodimer. Interacts with AKAP3 and RHPN1. May interact with SPA17. Interacts with FSCB; the interaction increases upon spermatozoa capacitation conditions. Interacts with CFAP61. Post-translationally, sumoylated, sumoylation decreases upon spermatozoa capacitation conditions. As to expression, testis specific in adult. Overexpressed in hematologic tumor cells.

Its subcellular location is the cell projection. The protein resides in the cilium. It is found in the flagellum. Important for male fertility. With ROPN1L, involved in fibrous sheath integrity and sperm motility, plays a role in PKA-dependent signaling processes required for spermatozoa capacitation. This chain is Ropporin-1A (ROPN1), found in Homo sapiens (Human).